A 150-amino-acid chain; its full sequence is Transmembrane protein PMIS2 (150 aa).

Over residues 1–12 (MALKPPSATQPA) the composition is skewed to low complexity. The tract at residues 1 to 61 (MALKPPSATQ…EPQEPTQTPE (61 aa)) is disordered. Over residues 13–22 (PNAPATPDAP) the composition is skewed to pro residues. A compositionally biased stretch (low complexity) spans 23–61 (PTTGDPGASAAPGSPTTTGGPGAPAEVPQEPQEPTQTPE). The next 2 helical transmembrane spans lie at 71 to 91 (LCLT…ALYF) and 130 to 150 (GWFG…LVLY).

The protein belongs to the CD225/Dispanin family.

The protein resides in the membrane. May play a role in spermatozoa mobility. This chain is Transmembrane protein PMIS2, found in Homo sapiens (Human).